A 306-amino-acid chain; its full sequence is Glutaminase (306 aa).

Residues S64, N115, E159, N166, Y190, Y242, and V260 each coordinate substrate.

The protein belongs to the glutaminase family. Homotetramer.

It catalyses the reaction L-glutamine + H2O = L-glutamate + NH4(+). This is Glutaminase from Vibrio cholerae serotype O1 (strain ATCC 39315 / El Tor Inaba N16961).